The primary structure comprises 368 residues: Mitogen-activated protein kinase HOG1B (368 aa).

One can recognise a Protein kinase domain in the interval 20-299 (YVNLEPVGMG…ASQALAHPYL (280 aa)). Residues 26-34 (VGMGAFGLV) and Lys49 contribute to the ATP site. The Proton acceptor role is filled by Asp141. Thr171 carries the post-translational modification Phosphothreonine. A TXY motif is present at residues 171–173 (TGY). Tyr173 is modified (phosphotyrosine).

It belongs to the protein kinase superfamily. Ser/Thr protein kinase family. MAP kinase subfamily. HOG1 sub-subfamily. The cofactor is Mg(2+). Post-translationally, phosphorylated. Dually phosphorylated on Thr-171 and Tyr-173, which activates the enzyme. Rapidly dephosphorylated upon either hypo- or hyperosmotic shock.

Its subcellular location is the cytoplasm. It is found in the nucleus. The enzyme catalyses L-seryl-[protein] + ATP = O-phospho-L-seryl-[protein] + ADP + H(+). The catalysed reaction is L-threonyl-[protein] + ATP = O-phospho-L-threonyl-[protein] + ADP + H(+). Its activity is regulated as follows. Activated by tyrosine and threonine phosphorylation. Its function is as follows. Mitogen-activated protein kinase involved in a signal transduction pathway that is activated by changes in the osmolarity of the extracellular environment. Controls osmotic regulation of transcription of target genes. The protein is Mitogen-activated protein kinase HOG1B (HOG1B) of Wallemia ichthyophaga (strain EXF-994 / CBS 113033).